We begin with the raw amino-acid sequence, 229 residues long: Cytidylate kinase (229 aa).

An ATP-binding site is contributed by glycine 7–serine 15.

This sequence belongs to the cytidylate kinase family. Type 1 subfamily.

The protein localises to the cytoplasm. The enzyme catalyses CMP + ATP = CDP + ADP. The catalysed reaction is dCMP + ATP = dCDP + ADP. The polypeptide is Cytidylate kinase (Rhodopirellula baltica (strain DSM 10527 / NCIMB 13988 / SH1)).